The following is a 473-amino-acid chain: MASAKEDNKHQGVGIVGAGLVGCLTALAFAAKGFSVTLFELRPDPKKVTNEKNLRSINLAVSDRGIRTLKYVDSEMADRVLEHVIPMTGRMIHDLSGTKQESQAYGLFGESINSIDRSFLNDYLLDEIRHSDINVHFNHKLIRLDDLSSEEKSPKLTFLDTSESNESTMKSYEFDYVIGADGAHSQFRYQLQKSMRMNISQEYIDMQYLELSIPPNTTGDSKFHIDPNHLHIWPRHEFMLIALANEDGSFTSTFFSPWSVIESFGTSSDKFIDFFKYNFPDAFKLMGEKKLRYAFENQPRGSLMQVNAYPYHNPNGRALIIGDAAHSMVPFYGQGMNCGFEDIRVLMELIDKNNGEVSESFRQYSVLRAEDLQTISKLALDNYHEMSSKVTNVWYLFRKKIDNMLGRYGNGLFQWIPMYTMISFRGDIPYSKAIKIEKRQTKILNAIEVGTLTGFILFGAAKLAQHYHKLSNK.

It belongs to the aromatic-ring hydroxylase family. KMO subfamily. FAD is required as a cofactor.

It is found in the mitochondrion outer membrane. The enzyme catalyses L-kynurenine + NADPH + O2 + H(+) = 3-hydroxy-L-kynurenine + NADP(+) + H2O. Its pathway is cofactor biosynthesis; NAD(+) biosynthesis; quinolinate from L-kynurenine: step 1/3. Functionally, catalyzes the hydroxylation of L-kynurenine (L-Kyn) to form 3-hydroxy-L-kynurenine (L-3OHKyn). Required for synthesis of quinolinic acid. This is Kynurenine 3-monooxygenase from Debaryomyces hansenii (strain ATCC 36239 / CBS 767 / BCRC 21394 / JCM 1990 / NBRC 0083 / IGC 2968) (Yeast).